Reading from the N-terminus, the 1159-residue chain is MPRKQPAGCIFLLTFLGLSGLVGTVTRTYYIGIVEEYWNYVPQGKNVITGKSFTEDKLATLFLERGPNRIGSIYKKAVYRRFTDGTYSIEIPKPPWLGFLGPILRAEVGDVIVIHLKNFASRPYSLHPHGVFYNKDSEGALYPDGTSGRNKNDDMVPPGKNYTYVWPVREEYAPTPADANCLTWVYHSHIDAPKDICSGLIGPLLVCKEGILNRYSGTRNDVDREFVIMFTLVDENQSWYLNENIKHFCTNPDSVDKKDAVFQRSNKMHALNGYLFGNFPEPDMCVGESVSWHLFGMGNEIDIHSIYFYGNTFISRGHRTDVVNLFPATFLTTEMIAENPGKWMITCQVSDHLQAGMLGQYNVDNCKSDIFYPKMKGQQRRYFIAAEKILWDYAPQGYNKFSGLPLNASGSDSDLYFTQGDNRIGGKYWKVRYTEFVDATFTKRKRLSAEEAHLGILGPVIKAEVGDTLLVTFANKADKVYSILPHGVIYDKASDAAPNLDGFVKPGAHVKPGETFTYKWTVPESVSPTAGDPPCLTYLYFSAVDPIKDTSSGLVGPLLVCKKGVLNADGTQKGIDKEFYLLFTVFDENLSRYFDENIQKFIWHPFSIDKEDKEFVKSNRMHAVNGYMYGNQPGLNMCKRDRVSWHLIGLGTDTDMHGIVFQGNTIHLRGTHRDSLALFPHMATTAFMQPDHAGIFRVFCATMPHLSRGMGQIYEVSSCDNRDPSEQRYGMIRTFYIAAEEVEWDYAPNKNWEFEKQHVDARGERHGDIFMNRTENWIGSQYKKVVYREYTDGEFVEIKARPPREEHLELLGPMIHAEVGNTVLIIFKNKASRPYSISAQGVEEMDSGKQFQVPMTKPGEVKTYRWNIPKRSGPGPSDPNCIPWVYYSTVNFVKDTYSGLMGPLITCRKGVLNEKGRRSDVDYEFALLFLVFNENESWYLDDNIKKYLNKDPRDFKRTDDFEESNRMHAINGKIFGNLHGLIMNEDTMTNWYLLGIGSEVDIHTIHYHAESFLFKIDKSYREDVYDLFPGTFQTIELFADHPGTWLLHCHVSDHIHAGMETTYTVLRNIDNRIPYSTTSPGVASHPATVPSNERPGKEQLYFFGKNLGPTGAKAALVILFIIGLLLLITTVILSLRLCSAMKQTDYQQVQSCALPTDAL.

The N-terminal stretch at 1-24 (MPRKQPAGCIFLLTFLGLSGLVGT) is a signal peptide. Plastocyanin-like domains lie at 25-207 (VTRT…LLVC), 218-366 (TRND…VDNC), 379-561 (QRRY…LLVC), 571-719 (TQKG…VSSC), 731-907 (MIRT…LITC), and 915-1092 (KGRR…VPSN). At 25–1114 (VTRTYYIGIV…KNLGPTGAKA (1090 aa)) the chain is on the extracellular side. Positions 127 and 129 each coordinate Cu cation. Asn161 carries an N-linked (GlcNAc...) asparagine glycan. Cys181 and Cys207 are oxidised to a cystine. Positions 187 and 189 each coordinate Cu cation. Asn236 carries an N-linked (GlcNAc...) asparagine glycan. Cys285 and Cys366 form a disulfide bridge. Positions 304, 347, and 352 each coordinate Cu cation. Asn407 carries N-linked (GlcNAc...) asparagine glycosylation. The cysteines at positions 535 and 561 are disulfide-linked. The N-linked (GlcNAc...) asparagine glycan is linked to Asn589. A disulfide bond links Cys638 and Cys719. Cu cation-binding residues include His657, Cys700, His705, and Met710. Asn772 carries an N-linked (GlcNAc...) asparagine glycan. The cysteines at positions 881 and 907 are disulfide-linked. N-linked (GlcNAc...) asparagine glycosylation occurs at Asn935. Cu cation is bound by residues His1003, His1006, His1008, His1048, Cys1049, His1050, His1054, and Met1059. A helical transmembrane segment spans residues 1115 to 1135 (ALVILFIIGLLLLITTVILSL). Residues 1136 to 1159 (RLCSAMKQTDYQQVQSCALPTDAL) are Cytoplasmic-facing.

It belongs to the multicopper oxidase family. The cofactor is Cu cation.

The protein localises to the membrane. The catalysed reaction is 4 Fe(2+) + O2 + 4 H(+) = 4 Fe(3+) + 2 H2O. Its function is as follows. Is a copper-binding glycoprotein with ferroxidase activity. It oxidizes Fe(2+) to Fe(3+) without releasing radical oxygen species. May be involved in the regulation of intracellular iron content. The protein is Ferroxidase HEPHL1 (HEPHL1) of Homo sapiens (Human).